Consider the following 1887-residue polypeptide: Protein TIC 214 (1887 aa).

6 consecutive transmembrane segments (helical) span residues Ile-18–Gly-38, Phe-64–Leu-84, Pro-87–His-107, Leu-124–Leu-144, Val-172–Ile-192, and Ile-221–Ile-241. 3 disordered regions span residues Glu-248–Asp-300, Arg-785–Arg-805, and Leu-1569–Pro-1603. A compositionally biased stretch (acidic residues) spans Val-256–Thr-268. Positions Arg-1578–Asn-1597 are enriched in basic and acidic residues.

Belongs to the TIC214 family. As to quaternary structure, part of the Tic complex.

The protein resides in the plastid. The protein localises to the chloroplast inner membrane. In terms of biological role, involved in protein precursor import into chloroplasts. May be part of an intermediate translocation complex acting as a protein-conducting channel at the inner envelope. This Solanum tuberosum (Potato) protein is Protein TIC 214.